Reading from the N-terminus, the 176-residue chain is Heme oxygenase HutZ (176 aa).

Residue H170 participates in heme binding.

This sequence belongs to the heme oxygenase HugZ/HutZ family. As to quaternary structure, homodimer. Interacts with HutX, leading to the transfer of the heme from HutX to apo-HutZ.

The catalysed reaction is heme b + 3 AH2 + 3 O2 + 2 H(+) = biliverdin IXbeta + CO + Fe(2+) + 3 A + 3 H2O. The enzyme catalyses heme b + 3 AH2 + 3 O2 + 3 H(+) = biliverdin IXdelta + CO + Fe(2+) + 3 A + 3 H2O. With respect to regulation, activity is pH-dependent. A proximal hydrogen bond between Asp-132 and the heme axial ligant His-170 is essential for heme degradation activity. Heme-degradation reaction is inhibited by iron chelators. In terms of biological role, involved in heme degradation. Catalyzes the degradation of heme to biliverdin, with the release of iron. Forms biliverdin beta and delta. Binds heme with high efficiency. The chain is Heme oxygenase HutZ from Vibrio cholerae serotype O1 (strain ATCC 39315 / El Tor Inaba N16961).